Consider the following 225-residue polypeptide: Histone H1 (225 aa).

The tract at residues 1 to 20 (MGPKATSGTRGRGKKVGTKT) is disordered. The H15 domain occupies 23 to 94 (PLPKYKDLIV…GPAGSIKLLK (72 aa)). Positions 95–147 (KAAQPKPEEAKRAAKPAKRVVKAAKPAKAKPAKAAKAAKPAKPVKAAKAASAV) are disordered. A compositionally biased stretch (basic residues) spans 107 to 127 (AAKPAKRVVKAAKPAKAKPAK). Positions 128–147 (AAKAAKPAKPVKAAKAASAV) are enriched in low complexity.

This sequence belongs to the histone H1/H5 family.

The protein localises to the nucleus. It localises to the chromosome. Could act as an H1-type linker histone. The polypeptide is Histone H1 (HHOA) (Eremothecium gossypii (strain ATCC 10895 / CBS 109.51 / FGSC 9923 / NRRL Y-1056) (Yeast)).